The chain runs to 217 residues: ATP-dependent Clp protease proteolytic subunit (217 aa).

Catalysis depends on Ser121, which acts as the Nucleophile. His146 is a catalytic residue.

The protein belongs to the peptidase S14 family. In terms of assembly, fourteen ClpP subunits assemble into 2 heptameric rings which stack back to back to give a disk-like structure with a central cavity, resembling the structure of eukaryotic proteasomes.

The protein resides in the cytoplasm. It catalyses the reaction Hydrolysis of proteins to small peptides in the presence of ATP and magnesium. alpha-casein is the usual test substrate. In the absence of ATP, only oligopeptides shorter than five residues are hydrolyzed (such as succinyl-Leu-Tyr-|-NHMec, and Leu-Tyr-Leu-|-Tyr-Trp, in which cleavage of the -Tyr-|-Leu- and -Tyr-|-Trp bonds also occurs).. Its function is as follows. Cleaves peptides in various proteins in a process that requires ATP hydrolysis. Has a chymotrypsin-like activity. Plays a major role in the degradation of misfolded proteins. This is ATP-dependent Clp protease proteolytic subunit from Burkholderia mallei (strain NCTC 10247).